The sequence spans 262 residues: Cytochrome c oxidase subunit 3 (262 aa).

The next 7 membrane-spanning stretches (helical) occupy residues 13-33, 38-58, 82-102, 134-154, 159-179, 200-220, and 237-257; these read PWPLLASFAAFLSTTGGVMYM, GGGLLLAIGQLSLFYVMYVWW, GMLLFILSEIMFFFAFFWAFF, TIILLTSGASVTWAHHAILAG, GIISLAITVLLAVIFTGFQAL, ATGFHGFHVIIGTIFIAVCLF, and AAAWYWHMVDVVWLFLFVCIY.

Belongs to the cytochrome c oxidase subunit 3 family. Component of the cytochrome c oxidase (complex IV, CIV), a multisubunit enzyme composed of a catalytic core of 3 subunits and several supernumerary subunits. The complex exists as a monomer or a dimer and forms supercomplexes (SCs) in the inner mitochondrial membrane with ubiquinol-cytochrome c oxidoreductase (cytochrome b-c1 complex, complex III, CIII).

The protein resides in the mitochondrion inner membrane. The enzyme catalyses 4 Fe(II)-[cytochrome c] + O2 + 8 H(+)(in) = 4 Fe(III)-[cytochrome c] + 2 H2O + 4 H(+)(out). Component of the cytochrome c oxidase, the last enzyme in the mitochondrial electron transport chain which drives oxidative phosphorylation. The respiratory chain contains 3 multisubunit complexes succinate dehydrogenase (complex II, CII), ubiquinol-cytochrome c oxidoreductase (cytochrome b-c1 complex, complex III, CIII) and cytochrome c oxidase (complex IV, CIV), that cooperate to transfer electrons derived from NADH and succinate to molecular oxygen, creating an electrochemical gradient over the inner membrane that drives transmembrane transport and the ATP synthase. Cytochrome c oxidase is the component of the respiratory chain that catalyzes the reduction of oxygen to water. Electrons originating from reduced cytochrome c in the intermembrane space (IMS) are transferred via the dinuclear copper A center (CU(A)) of subunit 2 and heme A of subunit 1 to the active site in subunit 1, a binuclear center (BNC) formed by heme A3 and copper B (CU(B)). The BNC reduces molecular oxygen to 2 water molecules using 4 electrons from cytochrome c in the IMS and 4 protons from the mitochondrial matrix. In Prototheca wickerhamii, this protein is Cytochrome c oxidase subunit 3 (COX3).